The following is a 509-amino-acid chain: MGVLKFKHIFFRSFVKSSGVSQIVFTFLLIPCCLTLNFRAPPVIPNVPFLWAWNAPSEFCLGKFDEPLDMSLFSFIGSPRINATGQGVTIFYVDRLGYYPYIDSITGVTVNGGIPQKISLQDHLDKAKKDITFYMPVDNLGMAVIDWEEWRPTWARNWKPKDVYKNRSIELVQQQNVQLSLTEATEKAKQEFEKAGKDFLVETIKLGKLLRPNHLWGYYLFPDCYNHHYKKPGYNGSCFNVEIKRNDDLSWLWNESTALYPSIYLNTQQSPVAATLYVRNRVREAIRVSKIPDAKSPLPVFAYTRIVFTDQVLKFLSQDELVYTFGETVALGASGIVIWGTLSIMRSMKSCLLLDNYMETILNPYIINVTLAAKMCSQVLCQEQGVCIRKNWNSSDYLHLNPDNFAIQLEKGGKFTVRGKPTLEDLEQFSEKFYCSCYSTLSCKEKADVKDTDAVDVCIADGVCIDAFLKPPMETEEPQIFYNASPSTLSATMFIVSILFLIISSVASL.

Residues 1–35 form the signal peptide; that stretch reads MGVLKFKHIFFRSFVKSSGVSQIVFTFLLIPCCLT. 2 disulfides stabilise this stretch: Cys60/Cys351 and Cys224/Cys238. Asn82 carries an N-linked (GlcNAc...) asparagine glycan. Glu148 serves as the catalytic Proton donor. N-linked (GlcNAc...) asparagine glycosylation is found at Asn166, Asn235, Asn254, and Asn368. 3 disulfides stabilise this stretch: Cys376–Cys387, Cys381–Cys435, and Cys437–Cys464. N-linked (GlcNAc...) asparagine glycosylation is present at Asn393. A lipid anchor (GPI-anchor amidated serine) is attached at Ser490. Residues 491–509 constitute a propeptide, removed in mature form; the sequence is ATMFIVSILFLIISSVASL.

It belongs to the glycosyl hydrolase 56 family. Post-translationally, N-glycosylated. In terms of tissue distribution, testis.

It is found in the cell membrane. It carries out the reaction Random hydrolysis of (1-&gt;4)-linkages between N-acetyl-beta-D-glucosamine and D-glucuronate residues in hyaluronate.. Functionally, involved in sperm-egg adhesion. Upon fertilization sperm must first penetrate a layer of cumulus cells that surrounds the egg before reaching the zona pellucida. The cumulus cells are embedded in a matrix containing hyaluronic acid which is formed prior to ovulation. This protein aids in penetrating the layer of cumulus cells by digesting hyaluronic acid. The chain is Hyaluronidase PH-20 (SPAM1) from Homo sapiens (Human).